A 182-amino-acid polypeptide reads, in one-letter code: Carbonic anhydrase (182 aa).

Residues His-64, His-81, and His-86 each coordinate Mg(2+).

The protein belongs to the gamma-class carbonic anhydrase family. Homotrimer. It depends on Mg(2+) as a cofactor. Requires Zn(2+) as cofactor.

The catalysed reaction is hydrogencarbonate + H(+) = CO2 + H2O. In terms of biological role, reversible hydration of carbon dioxide. This Geobacillus kaustophilus (strain HTA426) protein is Carbonic anhydrase.